Reading from the N-terminus, the 739-residue chain is Probable beta-glucosidase L (739 aa).

The signal sequence occupies residues 1–17; that stretch reads MQTLFLSLLAAAVTVHA. N40 and N224 each carry an N-linked (GlcNAc...) asparagine glycan. D252 is an active-site residue. N-linked (GlcNAc...) asparagine glycosylation occurs at N398.

This sequence belongs to the glycosyl hydrolase 3 family.

The protein resides in the secreted. It catalyses the reaction Hydrolysis of terminal, non-reducing beta-D-glucosyl residues with release of beta-D-glucose.. It functions in the pathway glycan metabolism; cellulose degradation. Its function is as follows. Beta-glucosidases are one of a number of cellulolytic enzymes involved in the degradation of cellulosic biomass. Catalyzes the last step releasing glucose from the inhibitory cellobiose. The sequence is that of Probable beta-glucosidase L (bglL) from Aspergillus fumigatus (strain ATCC MYA-4609 / CBS 101355 / FGSC A1100 / Af293) (Neosartorya fumigata).